A 197-amino-acid chain; its full sequence is Recombination protein RecR (197 aa).

Residues 55–70 form a C4-type zinc finger; it reads CVQCRDFTESEVCAIC. Residues 78–173 form the Toprim domain; that stretch reads QQLCVVESPA…RPSRLAQGMP (96 aa).

Belongs to the RecR family.

In terms of biological role, may play a role in DNA repair. It seems to be involved in an RecBC-independent recombinational process of DNA repair. It may act with RecF and RecO. The polypeptide is Recombination protein RecR (Xanthomonas campestris pv. campestris (strain 8004)).